Here is a 414-residue protein sequence, read N- to C-terminus: 2,3-diketo-5-methylthiopentyl-1-phosphate enolase (414 aa).

K99 serves as the catalytic Proton acceptor. Residues K148, 174–177 (KDDE), H265, G338, and 360–361 (GG) each bind substrate. Mg(2+)-binding residues include K174, D176, and E177. K174 carries the post-translational modification N6-carboxylysine.

Belongs to the RuBisCO large chain family. Type IV subfamily. In terms of assembly, homodimer. It depends on Mg(2+) as a cofactor.

The enzyme catalyses 5-methylsulfanyl-2,3-dioxopentyl phosphate = 2-hydroxy-5-methylsulfanyl-3-oxopent-1-enyl phosphate. The protein operates within amino-acid biosynthesis; L-methionine biosynthesis via salvage pathway; L-methionine from S-methyl-5-thio-alpha-D-ribose 1-phosphate: step 3/6. Functionally, catalyzes the enolization of 2,3-diketo-5-methylthiopentyl-1-phosphate (DK-MTP-1-P) into 2-hydroxy-3-keto-5-methylthiopentenyl-1-phosphate (HK-MTPenyl-1-P). The chain is 2,3-diketo-5-methylthiopentyl-1-phosphate enolase from Bacillus thuringiensis (strain Al Hakam).